We begin with the raw amino-acid sequence, 282 residues long: ESX-1 secretion-associated protein EspG1 (282 aa).

This sequence belongs to the EspG family. As to quaternary structure, interacts specifically with ESX-1-dependent PE/PPE proteins.

The protein localises to the cytoplasm. Functionally, part of the ESX-1 / type VII specialized secretion system (T7SS), which exports several proteins including EsxA and EsxB. Specific chaperone for cognate PE/PPE proteins, plays an important role in preventing aggregation of PE/PPE dimers. Also plays a role in DNA conjugation, in at least recipient strain. The chain is ESX-1 secretion-associated protein EspG1 from Mycolicibacterium smegmatis (strain ATCC 700084 / mc(2)155) (Mycobacterium smegmatis).